Consider the following 463-residue polypeptide: Elongation factor 1-alpha (463 aa).

Residues 8 to 245 enclose the tr-type G domain; the sequence is KTHLNIVIIG…DALVPPVRPA (238 aa). The interval 17–24 is G1; it reads GHVDSGKS. GTP is bound at residue 17-24; sequence GHVDSGKS. The segment at 73-77 is G2; it reads GITID. Residues 94–97 are G3; sequence DAPG. GTP contacts are provided by residues 94–98 and 156–159; these read DAPGH and NKMD. The tract at residues 156–159 is G4; the sequence is NKMD. Positions 197–199 are G5; it reads SGW.

It belongs to the TRAFAC class translation factor GTPase superfamily. Classic translation factor GTPase family. EF-Tu/EF-1A subfamily. As to quaternary structure, the 42S RNP particle comprises four subunits each of which contains one molecule of 5S RNA, three molecules of tRNA, two molecules of EF1-alpha and one molecule of the 5S RNA binding protein 43.

It localises to the cytoplasm. This protein is one of two protein components of a 42S RNP particle that is very abundant in previtellogenic oocytes. A major function served by 42sp50 appears to be the storage of tRNAs for later use in oogenesis and early embryogenesis. Purified 42S particles can directly transfer aminoacyl tRNA to ribosomes. The protein is Elongation factor 1-alpha of Xenopus laevis (African clawed frog).